A 120-amino-acid polypeptide reads, in one-letter code: uncharacterized protein (120 aa).

Its subcellular location is the mitochondrion. This is an uncharacterized protein from Arabidopsis thaliana (Mouse-ear cress).